Reading from the N-terminus, the 298-residue chain is Bifunctional protein FolD (298 aa).

NADP(+) contacts are provided by residues 166 to 168 (GRS), S191, and I232.

It belongs to the tetrahydrofolate dehydrogenase/cyclohydrolase family. As to quaternary structure, homodimer.

It carries out the reaction (6R)-5,10-methylene-5,6,7,8-tetrahydrofolate + NADP(+) = (6R)-5,10-methenyltetrahydrofolate + NADPH. The enzyme catalyses (6R)-5,10-methenyltetrahydrofolate + H2O = (6R)-10-formyltetrahydrofolate + H(+). It participates in one-carbon metabolism; tetrahydrofolate interconversion. Its function is as follows. Catalyzes the oxidation of 5,10-methylenetetrahydrofolate to 5,10-methenyltetrahydrofolate and then the hydrolysis of 5,10-methenyltetrahydrofolate to 10-formyltetrahydrofolate. In Erythrobacter litoralis (strain HTCC2594), this protein is Bifunctional protein FolD.